The following is a 130-amino-acid chain: Small ribosomal subunit protein uS9 (130 aa).

This sequence belongs to the universal ribosomal protein uS9 family.

The protein is Small ribosomal subunit protein uS9 of Aliivibrio fischeri (strain MJ11) (Vibrio fischeri).